Here is a 623-residue protein sequence, read N- to C-terminus: NAD-dependent malic enzyme, mitochondrial (623 aa).

A mitochondrion-targeting transit peptide spans 1 to 31; it reads MLVLCSRSRLTSSLIRRLKDQIANVSNHRSF. Fumarate-binding residues include Arg-88 and Arg-122. Ser-143 (proton donor) is an active-site residue. Arg-196 is a binding site for (S)-malate. NAD(+) is bound at residue Arg-196. Lys-214 acts as the Proton acceptor in catalysis. Residues Glu-285 and Asp-286 each coordinate a divalent metal cation. Asn-289 lines the NAD(+) pocket. Asp-309 is a binding site for a divalent metal cation. Ala-345 is a binding site for NAD(+). (S)-malate-binding residues include Asn-464 and Asn-509.

This sequence belongs to the malic enzymes family. As to quaternary structure, heterodimer of two related subunits. The cofactor is Mg(2+). It depends on Mn(2+) as a cofactor.

The protein resides in the mitochondrion matrix. The enzyme catalyses (S)-malate + NAD(+) = pyruvate + CO2 + NADH. Its pathway is photosynthesis; C4 acid pathway. This chain is NAD-dependent malic enzyme, mitochondrial, found in Amaranthus hypochondriacus (Prince-of-Wales feather).